The primary structure comprises 388 residues: Protein RecA (388 aa).

79 to 86 lines the ATP pocket; the sequence is GPESSGKT. The interval 347–372 is disordered; sequence IDGEEVSEQDTENKKDEPKKEEAVNE. Over residues 357 to 369 the composition is skewed to basic and acidic residues; sequence TENKKDEPKKEEA.

This sequence belongs to the RecA family.

The protein localises to the cytoplasm. In terms of biological role, can catalyze the hydrolysis of ATP in the presence of single-stranded DNA, the ATP-dependent uptake of single-stranded DNA by duplex DNA, and the ATP-dependent hybridization of homologous single-stranded DNAs. It interacts with LexA causing its activation and leading to its autocatalytic cleavage. This chain is Protein RecA, found in Streptococcus pneumoniae (strain CGSP14).